The primary structure comprises 117 residues: Venom protein TxLP11 (117 aa).

An N-terminal signal peptide occupies residues Met-1–Ala-22.

Contains 4 disulfide bonds. As to expression, expressed by the venom gland.

Its subcellular location is the secreted. The sequence is that of Venom protein TxLP11 from Lychas mucronatus (Chinese swimming scorpion).